We begin with the raw amino-acid sequence, 139 residues long: MKKGTVLNSEISSVISRLGHTDTLVVCDAGLPVPHSTTRIDMALTQGVPSFMQVLDVVTAEMQVETAILATEIKQHNPQLHETLLGHIEQLQQHQGNTIEIRYTTHEQFKQQTADSQAVIRSGECSPYANIILCAGVTF.

The Proton donor role is filled by histidine 20. Residues aspartate 28, histidine 106, and 128–130 (YAN) contribute to the substrate site.

Belongs to the RbsD / FucU family. RbsD subfamily. In terms of assembly, homodecamer.

Its subcellular location is the cytoplasm. The catalysed reaction is beta-D-ribopyranose = beta-D-ribofuranose. The protein operates within carbohydrate metabolism; D-ribose degradation; D-ribose 5-phosphate from beta-D-ribopyranose: step 1/2. Functionally, catalyzes the interconversion of beta-pyran and beta-furan forms of D-ribose. The chain is D-ribose pyranase from Enterobacter sp. (strain 638).